The primary structure comprises 145 residues: Probable low molecular weight protein-tyrosine-phosphatase EpsP (145 aa).

C9 acts as the Nucleophile in catalysis. R15 is an active-site residue. The active-site Proton donor is the D114.

The protein belongs to the low molecular weight phosphotyrosine protein phosphatase family.

The catalysed reaction is O-phospho-L-tyrosyl-[protein] + H2O = L-tyrosyl-[protein] + phosphate. It participates in glycan metabolism; exopolysaccharide biosynthesis. Its function is as follows. May be involved in assembly or function of the EPS I polymerization/export complex and/or the EpsB ATPase. Alternatively it may function in the removal of the terminal phosphate from C55-isoprenyl pyrophosphate in order to recycle the C55-isoprenyl phosphate lipid carrier used in the synthesis of polysaccharide repeat units. The chain is Probable low molecular weight protein-tyrosine-phosphatase EpsP (epsP) from Ralstonia nicotianae (strain ATCC BAA-1114 / GMI1000) (Ralstonia solanacearum).